The following is a 5058-amino-acid chain: ATP-binding cassette sub-family A member 13 (5058 aa).

A run of 7 helical transmembrane segments spans residues 23–43 (PVLF…LTVL), 3568–3588 (VGFF…ASMV), 3607–3627 (GVHP…VLTI), 3648–3668 (FIVF…SYLL), 3679–3699 (ALCT…LLVL), 3709–3729 (TFLC…ITFL), and 3752–3772 (FGWV…CGWY). The 233-residue stretch at 3842–4074 (VTLVSVTKEY…YGQGLRLTLT (233 aa)) folds into the ABC transporter 1 domain. 3875–3882 (GTNGAGKT) contributes to the ATP binding site. 7 helical membrane passes run 4226–4246 (TLAD…LFMV), 4458–4478 (VALC…SSVV), 4504–4524 (FLYD…VIVA), 4536–4556 (LAAT…WMYL), 4568–4588 (FISY…ITIM), 4607–4627 (VLKW…LVEL), and 4651–4671 (MNFL…LLLL). Positions 4718 to 4956 (LVLYNLSKHY…FGDGYTVKVW (239 aa)) constitute an ABC transporter 2 domain. 4754–4761 (GVNGAGKS) contributes to the ATP binding site.

It belongs to the ABC transporter superfamily. Significantly expressed in the bone marrow, trachea, testis, thyroid and lung as well as in skin fibroblasts.

The protein localises to the cytoplasmic vesicle membrane. It catalyses the reaction cholesterol(in) + ATP + H2O = cholesterol(out) + ADP + phosphate + H(+). Functionally, may mediate the cholesterol and gangliosides transport from the plasma membrane to intracellular vesicles in an ATP hydrolysis dependent manner, thus playing a role in their internalization by endocytic retrograde transport and may also participate in the endocytosis of synaptic vesicle in cortical neurons. The chain is ATP-binding cassette sub-family A member 13 from Homo sapiens (Human).